Reading from the N-terminus, the 137-residue chain is Small ribosomal subunit protein uS11 (137 aa).

Residues 116–137 (EDVTPIPHDGTRPKGGRRGRRV) form a disordered region.

Belongs to the universal ribosomal protein uS11 family. Part of the 30S ribosomal subunit.

In terms of biological role, located on the platform of the 30S subunit. This Pyrococcus abyssi (strain GE5 / Orsay) protein is Small ribosomal subunit protein uS11.